A 185-amino-acid chain; its full sequence is Peptidyl-tRNA hydrolase (185 aa).

Position 14 (Y14) interacts with tRNA. The Proton acceptor role is filled by H19. Positions 64, 66, and 112 each coordinate tRNA.

It belongs to the PTH family. Monomer.

Its subcellular location is the cytoplasm. The catalysed reaction is an N-acyl-L-alpha-aminoacyl-tRNA + H2O = an N-acyl-L-amino acid + a tRNA + H(+). Its function is as follows. Hydrolyzes ribosome-free peptidyl-tRNAs (with 1 or more amino acids incorporated), which drop off the ribosome during protein synthesis, or as a result of ribosome stalling. Functionally, catalyzes the release of premature peptidyl moieties from peptidyl-tRNA molecules trapped in stalled 50S ribosomal subunits, and thus maintains levels of free tRNAs and 50S ribosomes. The polypeptide is Peptidyl-tRNA hydrolase (Lactiplantibacillus plantarum (strain ATCC BAA-793 / NCIMB 8826 / WCFS1) (Lactobacillus plantarum)).